The chain runs to 164 residues: Thiol peroxidase (164 aa).

The region spanning 18–164 (KKVGDSAPDF…YEAVLSHLNK (147 aa)) is the Thioredoxin domain. Cys-60 functions as the Cysteine sulfenic acid (-SOH) intermediate in the catalytic mechanism. A disulfide bridge links Cys-60 with Cys-94.

Belongs to the peroxiredoxin family. Tpx subfamily. In terms of assembly, homodimer.

It carries out the reaction a hydroperoxide + [thioredoxin]-dithiol = an alcohol + [thioredoxin]-disulfide + H2O. Its function is as follows. Thiol-specific peroxidase that catalyzes the reduction of hydrogen peroxide and organic hydroperoxides to water and alcohols, respectively. Plays a role in cell protection against oxidative stress by detoxifying peroxides. This is Thiol peroxidase from Oceanobacillus iheyensis (strain DSM 14371 / CIP 107618 / JCM 11309 / KCTC 3954 / HTE831).